The chain runs to 279 residues: Ribosomal RNA small subunit methyltransferase A (279 aa).

His11, Leu13, Gly42, Glu63, Asp88, and Asn104 together coordinate S-adenosyl-L-methionine.

This sequence belongs to the class I-like SAM-binding methyltransferase superfamily. rRNA adenine N(6)-methyltransferase family. RsmA subfamily.

It is found in the cytoplasm. It carries out the reaction adenosine(1518)/adenosine(1519) in 16S rRNA + 4 S-adenosyl-L-methionine = N(6)-dimethyladenosine(1518)/N(6)-dimethyladenosine(1519) in 16S rRNA + 4 S-adenosyl-L-homocysteine + 4 H(+). Its function is as follows. Specifically dimethylates two adjacent adenosines (A1518 and A1519) in the loop of a conserved hairpin near the 3'-end of 16S rRNA in the 30S particle. May play a critical role in biogenesis of 30S subunits. This chain is Ribosomal RNA small subunit methyltransferase A, found in Synechococcus sp. (strain JA-3-3Ab) (Cyanobacteria bacterium Yellowstone A-Prime).